Here is a 365-residue protein sequence, read N- to C-terminus: Alanine racemase (365 aa).

Lys-36 acts as the Proton acceptor; specific for D-alanine in catalysis. Lys-36 carries the post-translational modification N6-(pyridoxal phosphate)lysine. Arg-132 is a binding site for substrate. The Proton acceptor; specific for L-alanine role is filled by Tyr-257. Met-305 lines the substrate pocket.

Belongs to the alanine racemase family. The cofactor is pyridoxal 5'-phosphate.

The catalysed reaction is L-alanine = D-alanine. Its pathway is amino-acid biosynthesis; D-alanine biosynthesis; D-alanine from L-alanine: step 1/1. Functionally, catalyzes the interconversion of L-alanine and D-alanine. May also act on other amino acids. This chain is Alanine racemase (alr), found in Xylella fastidiosa (strain Temecula1 / ATCC 700964).